We begin with the raw amino-acid sequence, 150 residues long: Protein Smg homolog (150 aa).

This sequence belongs to the Smg family.

This is Protein Smg homolog from Leptothrix cholodnii (strain ATCC 51168 / LMG 8142 / SP-6) (Leptothrix discophora (strain SP-6)).